We begin with the raw amino-acid sequence, 272 residues long: Prohibitin 1 (272 aa).

The stretch at 177–211 (KEFTEAVEMKQVAQQEAERARFIVEKAEQQKKAAV) forms a coiled coil.

In terms of assembly, the mitochondrial prohibitin complex consists of two subunits (PHB1 and PHB2), assembled into a membrane-associated ring-shaped supercomplex of approximately 1 mDa.

It is found in the mitochondrion inner membrane. The protein resides in the nucleus. The protein localises to the cytoplasm. It localises to the cell membrane. Its function is as follows. Protein with pleiotropic attributes mediated in a cell-compartment- and tissue-specific manner, which include the plasma membrane-associated cell signaling functions, mitochondrial chaperone, and transcriptional co-regulator of transcription factors in the nucleus. Functionally, in the mitochondria, together with PHB2, forms large ring complexes (prohibitin complexes) in the inner mitochondrial membrane (IMM) and functions as a chaperone protein that stabilizes mitochondrial respiratory enzymes and maintains mitochondrial integrity in the IMM, which is required for mitochondrial morphogenesis, neuronal survival, and normal lifespan. In terms of biological role, in the nucleus, acts as a transcription coregulator, enhances promoter binding by TP53, a transcription factor it activates, but reduces the promoter binding by E2F1, a transcription factor it represses. In the plasma membrane, cooperates with CD86 to mediate CD86-signaling in B lymphocytes that regulates the level of IgG1 produced through the activation of distal signaling intermediates. Upon CD40 engagement, required to activate NF-kappa-B signaling pathway via phospholipase C and protein kinase C activation. This Gallus gallus (Chicken) protein is Prohibitin 1 (PHB1).